Consider the following 196-residue polypeptide: Heat shock protein beta-8 (196 aa).

The disordered stretch occupies residues 1–28 (MADGQLPFPCSYPSRLRRDPFRDSPLSS). Ser-24 and Ser-57 each carry phosphoserine. A Phosphothreonine modification is found at Thr-63. Residues Arg-71 and Arg-78 each carry the asymmetric dimethylarginine modification. Positions 74–185 (TATARFGVPA…PFGESSFNNE (112 aa)) constitute a sHSP domain. The disordered stretch occupies residues 176–196 (PFGESSFNNELPQDNQEVTCS). The segment covering 178 to 196 (GESSFNNELPQDNQEVTCS) has biased composition (polar residues).

Belongs to the small heat shock protein (HSP20) family. As to quaternary structure, monomer. Forms a ternary complex with BAG3 and HSPA1A. Component of the chaperone-assisted selective autophagy (CASA) complex consisting of BAG3, HSPA8/HSC70, HSPB8 and STUB1/CHIP. Interacts with HSPB1. Interacts with DNAJB6. Interacts with BAG3. Post-translationally, phosphorylated.

It localises to the cytoplasm. The protein resides in the nucleus. Involved in the chaperone-assisted selective autophagy (CASA), a crucial process for protein quality control, particularly in mechanical strained cells and tissues such as muscle. Displays temperature-dependent chaperone activity. This chain is Heat shock protein beta-8 (Hspb8), found in Rattus norvegicus (Rat).